The following is a 294-amino-acid chain: N-acetylmuramic acid 6-phosphate etherase (294 aa).

One can recognise an SIS domain in the interval 56–219 (TSQALKKGGR…STLSMVSVGK (164 aa)). The active-site Proton donor is E84. E115 is a catalytic residue.

This sequence belongs to the GCKR-like family. MurNAc-6-P etherase subfamily. In terms of assembly, homodimer.

The enzyme catalyses N-acetyl-D-muramate 6-phosphate + H2O = N-acetyl-D-glucosamine 6-phosphate + (R)-lactate. It functions in the pathway amino-sugar metabolism; 1,6-anhydro-N-acetylmuramate degradation. The protein operates within amino-sugar metabolism; N-acetylmuramate degradation. It participates in cell wall biogenesis; peptidoglycan recycling. Specifically catalyzes the cleavage of the D-lactyl ether substituent of MurNAc 6-phosphate, producing GlcNAc 6-phosphate and D-lactate. Together with AnmK, is also required for the utilization of anhydro-N-acetylmuramic acid (anhMurNAc) either imported from the medium or derived from its own cell wall murein, and thus plays a role in cell wall recycling. This Francisella philomiragia subsp. philomiragia (strain ATCC 25017 / CCUG 19701 / FSC 153 / O#319-036) protein is N-acetylmuramic acid 6-phosphate etherase.